The primary structure comprises 203 residues: WUSCHEL-related homeobox 3 (203 aa).

The segment at residues 4–68 (TPSTRWCPTP…NHKARERQRL (65 aa)) is a DNA-binding region (homeobox; WUS-type). Disordered regions lie at residues 73–95 (CARHQQQPSPPSSTVPPAPTAAA), 109–135 (LHHHHHHHHPYAAAAAAQSHHLQQQQQ), and 180–203 (STSGGLKEDCCSSSKSSSCSTSTN). Positions 80-91 (PSPPSSTVPPAP) are enriched in pro residues. Over residues 109 to 118 (LHHHHHHHHP) the composition is skewed to basic residues. 2 stretches are compositionally biased toward low complexity: residues 119-135 (YAAAAAAQSHHLQQQQQ) and 190-203 (CSSSKSSSCSTSTN).

The protein belongs to the WUS homeobox family.

Its subcellular location is the nucleus. Its function is as follows. Transcription factor which may be involved in developmental processes. The sequence is that of WUSCHEL-related homeobox 3 (WOX3) from Oryza sativa subsp. indica (Rice).